Consider the following 116-residue polypeptide: Toxin ICK-10 (116 aa).

An N-terminal signal peptide occupies residues 1-19 (MMKLYSLVIIATLAAAAFA). 4 cysteine pairs are disulfide-bonded: C56/C71, C64/C77, C68/C113, and C70/C84.

This sequence belongs to the neurotoxin 25 family. ICK-8 subfamily. As to expression, expressed by the venom gland.

It localises to the secreted. Ion channel inhibitor. In Trittame loki (Brush-footed trapdoor spider), this protein is Toxin ICK-10.